The chain runs to 956 residues: Valine--tRNA ligase (956 aa).

A 'HIGH' region motif is present at residues 43–53 (PNITGNLHIGH). The 'KMSKS' region signature appears at 556-560 (KMSKS). Lysine 559 lines the ATP pocket. The stretch at 889–920 (PKEKELKNLNKEISKIQLAINKLQQRLSNEEF) forms a coiled coil.

Belongs to the class-I aminoacyl-tRNA synthetase family. ValS type 1 subfamily. Monomer.

The protein resides in the cytoplasm. It catalyses the reaction tRNA(Val) + L-valine + ATP = L-valyl-tRNA(Val) + AMP + diphosphate. Functionally, catalyzes the attachment of valine to tRNA(Val). As ValRS can inadvertently accommodate and process structurally similar amino acids such as threonine, to avoid such errors, it has a 'posttransfer' editing activity that hydrolyzes mischarged Thr-tRNA(Val) in a tRNA-dependent manner. This chain is Valine--tRNA ligase, found in Buchnera aphidicola subsp. Baizongia pistaciae (strain Bp).